A 211-amino-acid chain; its full sequence is Large ribosomal subunit protein uL4 (211 aa).

The tract at residues asparagine 42–arginine 73 is disordered.

Belongs to the universal ribosomal protein uL4 family. In terms of assembly, part of the 50S ribosomal subunit.

In terms of biological role, one of the primary rRNA binding proteins, this protein initially binds near the 5'-end of the 23S rRNA. It is important during the early stages of 50S assembly. It makes multiple contacts with different domains of the 23S rRNA in the assembled 50S subunit and ribosome. Its function is as follows. Forms part of the polypeptide exit tunnel. In Leptospira biflexa serovar Patoc (strain Patoc 1 / Ames), this protein is Large ribosomal subunit protein uL4.